Here is a 183-residue protein sequence, read N- to C-terminus: NADH-quinone oxidoreductase subunit I (183 aa).

2 4Fe-4S ferredoxin-type domains span residues 71–100 (KRDEQGRENCTACGLCALSCPAEAITMKAA) and 117–146 (EIYEINMLRCIFCGLCEEACPKDAIYLTTS). Positions 80, 83, 86, 90, 126, 129, 132, and 136 each coordinate [4Fe-4S] cluster.

The protein belongs to the complex I 23 kDa subunit family. In terms of assembly, NDH-1 is composed of 14 different subunits. Subunits NuoA, H, J, K, L, M, N constitute the membrane sector of the complex. The cofactor is [4Fe-4S] cluster.

It is found in the cell inner membrane. The enzyme catalyses a quinone + NADH + 5 H(+)(in) = a quinol + NAD(+) + 4 H(+)(out). Functionally, NDH-1 shuttles electrons from NADH, via FMN and iron-sulfur (Fe-S) centers, to quinones in the respiratory chain. The immediate electron acceptor for the enzyme in this species is believed to be ubiquinone. Couples the redox reaction to proton translocation (for every two electrons transferred, four hydrogen ions are translocated across the cytoplasmic membrane), and thus conserves the redox energy in a proton gradient. The protein is NADH-quinone oxidoreductase subunit I of Flavobacterium psychrophilum (strain ATCC 49511 / DSM 21280 / CIP 103535 / JIP02/86).